Reading from the N-terminus, the 619-residue chain is 2-succinyl-5-enolpyruvyl-6-hydroxy-3-cyclohexene-1-carboxylate synthase (619 aa).

Over residues 385-398 the composition is skewed to polar residues; that stretch reads SSAHQSLAATNSDS. A disordered region spans residues 385-415; that stretch reads SSAHQSLAATNSDSSTDDIIENTDEEGSNES. Residues 399 to 413 show a composition bias toward acidic residues; sequence STDDIIENTDEEGSN.

This sequence belongs to the TPP enzyme family. MenD subfamily. Homodimer. The cofactor is Mg(2+). It depends on Mn(2+) as a cofactor. Thiamine diphosphate is required as a cofactor.

It carries out the reaction isochorismate + 2-oxoglutarate + H(+) = 5-enolpyruvoyl-6-hydroxy-2-succinyl-cyclohex-3-ene-1-carboxylate + CO2. It participates in quinol/quinone metabolism; 1,4-dihydroxy-2-naphthoate biosynthesis; 1,4-dihydroxy-2-naphthoate from chorismate: step 2/7. The protein operates within quinol/quinone metabolism; menaquinone biosynthesis. Catalyzes the thiamine diphosphate-dependent decarboxylation of 2-oxoglutarate and the subsequent addition of the resulting succinic semialdehyde-thiamine pyrophosphate anion to isochorismate to yield 2-succinyl-5-enolpyruvyl-6-hydroxy-3-cyclohexene-1-carboxylate (SEPHCHC). The sequence is that of 2-succinyl-5-enolpyruvyl-6-hydroxy-3-cyclohexene-1-carboxylate synthase from Haloquadratum walsbyi (strain DSM 16790 / HBSQ001).